The primary structure comprises 224 residues: Thiamine-phosphate synthase (224 aa).

Residues 43-47 and Asn75 each bind 4-amino-2-methyl-5-(diphosphooxymethyl)pyrimidine; that span reads QYRPK. Mg(2+)-binding residues include Asp76 and Asp95. Ser114 contacts 4-amino-2-methyl-5-(diphosphooxymethyl)pyrimidine. 141 to 143 is a 2-[(2R,5Z)-2-carboxy-4-methylthiazol-5(2H)-ylidene]ethyl phosphate binding site; the sequence is SAT. Lys144 provides a ligand contact to 4-amino-2-methyl-5-(diphosphooxymethyl)pyrimidine. Gly171 is a binding site for 2-[(2R,5Z)-2-carboxy-4-methylthiazol-5(2H)-ylidene]ethyl phosphate.

The protein belongs to the thiamine-phosphate synthase family. It depends on Mg(2+) as a cofactor.

It carries out the reaction 2-[(2R,5Z)-2-carboxy-4-methylthiazol-5(2H)-ylidene]ethyl phosphate + 4-amino-2-methyl-5-(diphosphooxymethyl)pyrimidine + 2 H(+) = thiamine phosphate + CO2 + diphosphate. It catalyses the reaction 2-(2-carboxy-4-methylthiazol-5-yl)ethyl phosphate + 4-amino-2-methyl-5-(diphosphooxymethyl)pyrimidine + 2 H(+) = thiamine phosphate + CO2 + diphosphate. The catalysed reaction is 4-methyl-5-(2-phosphooxyethyl)-thiazole + 4-amino-2-methyl-5-(diphosphooxymethyl)pyrimidine + H(+) = thiamine phosphate + diphosphate. It functions in the pathway cofactor biosynthesis; thiamine diphosphate biosynthesis; thiamine phosphate from 4-amino-2-methyl-5-diphosphomethylpyrimidine and 4-methyl-5-(2-phosphoethyl)-thiazole: step 1/1. Condenses 4-methyl-5-(beta-hydroxyethyl)thiazole monophosphate (THZ-P) and 2-methyl-4-amino-5-hydroxymethyl pyrimidine pyrophosphate (HMP-PP) to form thiamine monophosphate (TMP). The polypeptide is Thiamine-phosphate synthase (Methylococcus capsulatus (strain ATCC 33009 / NCIMB 11132 / Bath)).